Here is a 261-residue protein sequence, read N- to C-terminus: Esterase citA (261 aa).

Catalysis depends on charge relay system residues Ser-122, Asp-207, and His-235.

It belongs to the LovG family.

It participates in mycotoxin biosynthesis. Non-reducing polyketide synthase; part of the gene cluster that mediates the biosynthesis of the mycotoxin citrinin, a hepato-nephrotoxic compound to humans due to inhibition of respiration complex III. The pathway begins with the synthesis of a keto-aldehyde intermediate by the citrinin PKS (pksCT also named citS) from successive condensations of 4 malonyl-CoA units, presumably with a simple acetyl-CoA starter unit. Release of the keto-aldehyde intermediate is consistent with the presence of the C-terminal reductive release domain. CitA collaborates with citS by catalyzing the hydrolysis of ACP-bound acyl intermediates to free the ACP from stalled intermediates. CitB then catalyzes the oxidation of the C-12 methyl of the ketone intermediate to an alcohol intermediate which is further oxidized by the oxidoreductase citC to produce a bisaldehyde intermediate. The fourth catalytic step is catalyzed by the citD aldehyde dehydrogenase. The final transformation is the reduction of C-3 by citE to provide the chemically stable citrinin nucleus. CitE appears highly selective for its substrate as its presence in any context other than a full complement of citS and citA-D does not result in observable new compounds. The sequence is that of Esterase citA from Monascus ruber (Mold).